The following is a 478-amino-acid chain: Probable cyclin-dependent kinase 9 (478 aa).

Positions 1–17 (MSAQNYHAGLHQSSTQR) are enriched in polar residues. Residues 1 to 55 (MSAQNYHAGLHQSSTQRPPKRPNTEHAQEPPKRALIGGQTTPSSSGGGQTPNGTN) are disordered. The span at 22–32 (PNTEHAQEPPK) shows a compositional bias: basic and acidic residues. The Protein kinase domain maps to 85-413 (YEKLNKIGQG…SDEAEDDIWF (329 aa)). Residues 91 to 99 (IGQGTFGEV) and Lys114 contribute to the ATP site. Asp217 acts as the Proton acceptor in catalysis. A disordered region spans residues 444–478 (HANRGRHQNAQQRPNQQQARPSNAIPAGQYRDTIF). A compositionally biased stretch (low complexity) spans 451 to 464 (QNAQQRPNQQQARP).

This sequence belongs to the protein kinase superfamily. CMGC Ser/Thr protein kinase family. CDC2/CDKX subfamily. In terms of assembly, associates with cyclin-T (cit-1.1 or cit-1.2) to form P-TEFb.

It is found in the nucleus. It catalyses the reaction L-seryl-[protein] + ATP = O-phospho-L-seryl-[protein] + ADP + H(+). The enzyme catalyses L-threonyl-[protein] + ATP = O-phospho-L-threonyl-[protein] + ADP + H(+). It carries out the reaction [DNA-directed RNA polymerase] + ATP = phospho-[DNA-directed RNA polymerase] + ADP + H(+). Functionally, essential member of the cyclin-dependent kinase pair (CDK9/cyclin-T) complex, also called positive transcription elongation factor B (P-TEFb), which is proposed to facilitate the transition from abortive to production elongation by phosphorylating the CTD (C-terminal domain) of the large subunit of RNA polymerase II (RNAP II) and spt-5. This chain is Probable cyclin-dependent kinase 9 (cdk-9), found in Caenorhabditis elegans.